A 456-amino-acid polypeptide reads, in one-letter code: Bifunctional protein GlmU (456 aa).

The tract at residues 1–229 (MLNNAMSVVI…LSEVEGVNNR (229 aa)) is pyrophosphorylase. Residues 11-14 (LAAG), K25, Q76, 81-82 (GT), 103-105 (YGD), G140, E154, N169, and N227 each bind UDP-N-acetyl-alpha-D-glucosamine. D105 is a Mg(2+) binding site. N227 is a binding site for Mg(2+). The tract at residues 230-250 (LQLSRLERVYQSEQAEKLLLA) is linker. An N-acetyltransferase region spans residues 251–456 (GVMLRDPARF…EGWRRPVKKK (206 aa)). Residues R333 and K351 each contribute to the UDP-N-acetyl-alpha-D-glucosamine site. The active-site Proton acceptor is H363. UDP-N-acetyl-alpha-D-glucosamine is bound by residues Y366 and N377. Residues A380, 386–387 (NY), S405, A423, and R440 each bind acetyl-CoA.

The protein in the N-terminal section; belongs to the N-acetylglucosamine-1-phosphate uridyltransferase family. In the C-terminal section; belongs to the transferase hexapeptide repeat family. In terms of assembly, homotrimer. The cofactor is Mg(2+).

It localises to the cytoplasm. The catalysed reaction is alpha-D-glucosamine 1-phosphate + acetyl-CoA = N-acetyl-alpha-D-glucosamine 1-phosphate + CoA + H(+). The enzyme catalyses N-acetyl-alpha-D-glucosamine 1-phosphate + UTP + H(+) = UDP-N-acetyl-alpha-D-glucosamine + diphosphate. It participates in nucleotide-sugar biosynthesis; UDP-N-acetyl-alpha-D-glucosamine biosynthesis; N-acetyl-alpha-D-glucosamine 1-phosphate from alpha-D-glucosamine 6-phosphate (route II): step 2/2. Its pathway is nucleotide-sugar biosynthesis; UDP-N-acetyl-alpha-D-glucosamine biosynthesis; UDP-N-acetyl-alpha-D-glucosamine from N-acetyl-alpha-D-glucosamine 1-phosphate: step 1/1. It functions in the pathway bacterial outer membrane biogenesis; LPS lipid A biosynthesis. Catalyzes the last two sequential reactions in the de novo biosynthetic pathway for UDP-N-acetylglucosamine (UDP-GlcNAc). The C-terminal domain catalyzes the transfer of acetyl group from acetyl coenzyme A to glucosamine-1-phosphate (GlcN-1-P) to produce N-acetylglucosamine-1-phosphate (GlcNAc-1-P), which is converted into UDP-GlcNAc by the transfer of uridine 5-monophosphate (from uridine 5-triphosphate), a reaction catalyzed by the N-terminal domain. The polypeptide is Bifunctional protein GlmU (Escherichia coli O8 (strain IAI1)).